A 297-amino-acid chain; its full sequence is Protein-methionine-sulfoxide reductase catalytic subunit MsrP (297 aa).

Positions 1 to 35 (MLITPEKLYKQRRNFLKLGAGALISSSVLASKLSA) form a signal peptide, tat-type signal. Mo-molybdopterin-binding positions include 62-63 (YE), Cys116, Thr151, Asn201, Arg206, and 217-219 (SIK).

It belongs to the MsrP family. As to quaternary structure, heterodimer of a catalytic subunit (MsrP) and a heme-binding subunit (MsrQ). Requires Mo-molybdopterin as cofactor. In terms of processing, predicted to be exported by the Tat system. The position of the signal peptide cleavage has not been experimentally proven.

The protein localises to the periplasm. It carries out the reaction L-methionyl-[protein] + a quinone + H2O = L-methionyl-(S)-S-oxide-[protein] + a quinol. The enzyme catalyses L-methionyl-[protein] + a quinone + H2O = L-methionyl-(R)-S-oxide-[protein] + a quinol. Its function is as follows. Part of the MsrPQ system that repairs oxidized periplasmic proteins containing methionine sulfoxide residues (Met-O), using respiratory chain electrons. Thus protects these proteins from oxidative-stress damage caused by reactive species of oxygen and chlorine generated by the host defense mechanisms. MsrPQ is essential for the maintenance of envelope integrity under bleach stress, rescuing a wide series of structurally unrelated periplasmic proteins from methionine oxidation. The catalytic subunit MsrP is non-stereospecific, being able to reduce both (R-) and (S-) diastereoisomers of methionine sulfoxide. This is Protein-methionine-sulfoxide reductase catalytic subunit MsrP from Campylobacter jejuni subsp. jejuni serotype O:2 (strain ATCC 700819 / NCTC 11168).